A 125-amino-acid polypeptide reads, in one-letter code: Large ribosomal subunit protein uL24 (125 aa).

This sequence belongs to the universal ribosomal protein uL24 family. As to quaternary structure, part of the 50S ribosomal subunit.

One of two assembly initiator proteins, it binds directly to the 5'-end of the 23S rRNA, where it nucleates assembly of the 50S subunit. In terms of biological role, one of the proteins that surrounds the polypeptide exit tunnel on the outside of the subunit. The chain is Large ribosomal subunit protein uL24 from Mycoplasma mobile (strain ATCC 43663 / 163K / NCTC 11711) (Mesomycoplasma mobile).